We begin with the raw amino-acid sequence, 122 residues long: Large ribosomal subunit protein uL18 (122 aa).

The protein belongs to the universal ribosomal protein uL18 family. In terms of assembly, part of the 50S ribosomal subunit; part of the 5S rRNA/L5/L18/L25 subcomplex. Contacts the 5S and 23S rRNAs.

Its function is as follows. This is one of the proteins that bind and probably mediate the attachment of the 5S RNA into the large ribosomal subunit, where it forms part of the central protuberance. The sequence is that of Large ribosomal subunit protein uL18 from Desulfitobacterium hafniense (strain DSM 10664 / DCB-2).